The sequence spans 619 residues: TOX high mobility group box family member 4 (619 aa).

Disordered regions lie at residues 155 to 227 (LSLG…QKPV), 304 to 335 (ELDPVPQSQTPSPPPVTTADPASPAPASTESP), and 436 to 458 (LPPPRLQPPPLQQMPQPPTQQQV). At Thr-176 the chain carries Phosphothreonine. Residues Ser-178 and Ser-182 each carry the phosphoserine modification. Over residues 183–193 (LHEDGVDDFRR) the composition is skewed to basic and acidic residues. Over residues 208–218 (KQKAPKKRKKK) the composition is skewed to basic residues. Positions 213-218 (KKRKKK) match the Nuclear localization signal motif. The HMG box DNA-binding region spans 223–291 (PQKPVSAYAL…EYLKALAAYK (69 aa)). Thr-313 carries the post-translational modification Phosphothreonine. Ser-315 carries the post-translational modification Phosphoserine. A compositionally biased stretch (low complexity) spans 320 to 335 (TTADPASPAPASTESP). The span at 436–453 (LPPPRLQPPPLQQMPQPP) shows a compositional bias: pro residues. Arg-479 bears the Asymmetric dimethylarginine mark. Ser-531, Ser-548, Ser-550, Ser-558, Ser-560, and Ser-565 each carry phosphoserine.

In terms of assembly, component of the PNUTS-PP1 phosphatase complex, composed of PPP1R10/PNUTS, TOX4, WDR82 and PPP1CA or PPP1CB or PPP1CC. Interacts with PPP1R10/PNUTS. Interacts with FOXO1 and CREB1 (increased by cAMP); FOXO1 and CREB1 are required for full induction of TOX4-dependent activity and the interactions are inhibited by insulin.

Its subcellular location is the nucleus. The protein localises to the chromosome. In liver, recruited to target gene promoters following treatment with dexamethasone and cAMP. Binding is decreased in presence of insulin. In terms of biological role, transcription factor that modulates cell fate reprogramming from the somatic state to the pluripotent and neuronal fate. In liver, controls the expression of hormone-regulated gluconeogenic genes such as G6PC1 and PCK1. This regulation is independent of the insulin receptor activation. Also acts as a regulatory component of protein phosphatase 1 (PP1) complexes. Component of the PNUTS-PP1 protein phosphatase complex, a PP1 complex that regulates RNA polymerase II transcription pause-release. PNUTS-PP1 also plays a role in the control of chromatin structure and cell cycle progression during the transition from mitosis into interphase. In Rattus norvegicus (Rat), this protein is TOX high mobility group box family member 4 (Tox4).